We begin with the raw amino-acid sequence, 69 residues long: Putative membrane protein insertion efficiency factor (69 aa).

This sequence belongs to the UPF0161 family.

Its subcellular location is the cell inner membrane. Functionally, could be involved in insertion of integral membrane proteins into the membrane. In Nitrosomonas eutropha (strain DSM 101675 / C91 / Nm57), this protein is Putative membrane protein insertion efficiency factor.